The primary structure comprises 906 residues: Protein translocase subunit SecA (906 aa).

ATP is bound by residues Q87, G105–T109, and D521. Positions S849 to S865 are enriched in low complexity. Residues S849–K897 are disordered. Over residues T866–P876 the composition is skewed to polar residues. Zn(2+)-binding residues include C891, C893, C902, and C903.

It belongs to the SecA family. As to quaternary structure, monomer and homodimer. Part of the essential Sec protein translocation apparatus which comprises SecA, SecYEG and auxiliary proteins SecDF-YajC and YidC. Zn(2+) is required as a cofactor.

The protein localises to the cell inner membrane. It localises to the cytoplasm. The enzyme catalyses ATP + H2O + cellular proteinSide 1 = ADP + phosphate + cellular proteinSide 2.. Part of the Sec protein translocase complex. Interacts with the SecYEG preprotein conducting channel. Has a central role in coupling the hydrolysis of ATP to the transfer of proteins into and across the cell membrane, serving both as a receptor for the preprotein-SecB complex and as an ATP-driven molecular motor driving the stepwise translocation of polypeptide chains across the membrane. This is Protein translocase subunit SecA from Dichelobacter nodosus (strain VCS1703A).